The chain runs to 153 residues: Prefoldin subunit alpha (153 aa).

The tract at residues 126–153 (KRLEQGYRQAPGGSPVPHRHDHEDHDEE) is disordered. The span at 143 to 153 (HRHDHEDHDEE) shows a compositional bias: basic and acidic residues.

It belongs to the prefoldin alpha subunit family. Heterohexamer of two alpha and four beta subunits.

It localises to the cytoplasm. In terms of biological role, molecular chaperone capable of stabilizing a range of proteins. Seems to fulfill an ATP-independent, HSP70-like function in archaeal de novo protein folding. This Methanoregula boonei (strain DSM 21154 / JCM 14090 / 6A8) protein is Prefoldin subunit alpha.